The chain runs to 334 residues: Formamidase (334 aa).

The 247-residue stretch at 14-260 (FLVAAIQFPV…WEIVTGEIYP (247 aa)) folds into the CN hydrolase domain. Glu60 serves as the catalytic Proton acceptor. Lys133 acts as the Proton donor in catalysis. Cys166 serves as the catalytic Nucleophile.

The protein belongs to the carbon-nitrogen hydrolase superfamily. Aliphatic amidase family.

It carries out the reaction formamide + H2O = formate + NH4(+). In terms of biological role, is an aliphatic amidase with a restricted substrate specificity, as it only hydrolyzes formamide. This is Formamidase from Helicobacter pylori (strain G27).